Reading from the N-terminus, the 396-residue chain is Elongation factor Tu (396 aa).

The tr-type G domain occupies 10–206; that stretch reads KPHVNIGTIG…AVDESVPDPI (197 aa). The G1 stretch occupies residues 19–26; that stretch reads GHVDHGKT. 19-26 provides a ligand contact to GTP; that stretch reads GHVDHGKT. Threonine 26 serves as a coordination point for Mg(2+). Positions 62–66 are G2; the sequence is GITIN. Residues 83 to 86 form a G3 region; sequence DAPG. GTP-binding positions include 83 to 87 and 138 to 141; these read DAPGH and NKSD. Positions 138–141 are G4; the sequence is NKSD. Residues 176–178 form a G5 region; sequence SGL.

Belongs to the TRAFAC class translation factor GTPase superfamily. Classic translation factor GTPase family. EF-Tu/EF-1A subfamily. In terms of assembly, monomer.

The protein localises to the cytoplasm. The catalysed reaction is GTP + H2O = GDP + phosphate + H(+). Functionally, GTP hydrolase that promotes the GTP-dependent binding of aminoacyl-tRNA to the A-site of ribosomes during protein biosynthesis. The sequence is that of Elongation factor Tu from Renibacterium salmoninarum (strain ATCC 33209 / DSM 20767 / JCM 11484 / NBRC 15589 / NCIMB 2235).